The chain runs to 282 residues: Shikimate dehydrogenase (NADP(+)) (282 aa).

Shikimate-binding positions include Ser-19 to Ser-21 and Thr-66. Lys-70 acts as the Proton acceptor in catalysis. The shikimate site is built by Asn-91 and Asp-106. NADP(+) is bound by residues Gly-130 to Ala-134, Asn-152 to Lys-157, Thr-196, Met-200, and Leu-224. Tyr-226 provides a ligand contact to shikimate. Gly-247 is a binding site for NADP(+).

It belongs to the shikimate dehydrogenase family. In terms of assembly, homodimer.

The enzyme catalyses shikimate + NADP(+) = 3-dehydroshikimate + NADPH + H(+). The protein operates within metabolic intermediate biosynthesis; chorismate biosynthesis; chorismate from D-erythrose 4-phosphate and phosphoenolpyruvate: step 4/7. Involved in the biosynthesis of the chorismate, which leads to the biosynthesis of aromatic amino acids. Catalyzes the reversible NADPH linked reduction of 3-dehydroshikimate (DHSA) to yield shikimate (SA). The polypeptide is Shikimate dehydrogenase (NADP(+)) (Methanocaldococcus jannaschii (strain ATCC 43067 / DSM 2661 / JAL-1 / JCM 10045 / NBRC 100440) (Methanococcus jannaschii)).